Here is a 224-residue protein sequence, read N- to C-terminus: Oxalate oxidase GF-3.8 (224 aa).

The first 23 residues, 1–23 (MGYSKNIASGMFAMLLLASAVLS), serve as a signal peptide directing secretion. A disulfide bridge links C33 with C49. One can recognise a Cupin type-1 domain in the interval 63 to 214 (SKLAKAGNTS…ALRVEAGVVE (152 aa)). N-linked (GlcNAc...) asparagine glycans are attached at residues N70 and N75. Mn(2+) contacts are provided by H111, H113, E118, and H160.

It belongs to the germin family. Oligomer (believed to be a pentamer but probably hexamer).

Its subcellular location is the secreted. The protein localises to the extracellular space. The protein resides in the apoplast. It is found in the cytoplasm. It localises to the cell wall. The enzyme catalyses oxalate + O2 + 2 H(+) = H2O2 + 2 CO2. Functionally, produces developmental and stress-related release of hydrogen peroxide in the apoplast. May play an important role in several aspects of plant growth and defense mechanisms. In Triticum aestivum (Wheat), this protein is Oxalate oxidase GF-3.8.